A 233-amino-acid polypeptide reads, in one-letter code: Orotidine 5'-phosphate decarboxylase (233 aa).

Substrate contacts are provided by residues Asp-11, Lys-34, 61-70, Thr-117, Arg-179, Gln-188, Gly-208, and Arg-209; that span reads DLKLHDIPNT. Lys-63 serves as the catalytic Proton donor.

Belongs to the OMP decarboxylase family. Type 1 subfamily. In terms of assembly, homodimer.

It catalyses the reaction orotidine 5'-phosphate + H(+) = UMP + CO2. It participates in pyrimidine metabolism; UMP biosynthesis via de novo pathway; UMP from orotate: step 2/2. Its function is as follows. Catalyzes the decarboxylation of orotidine 5'-monophosphate (OMP) to uridine 5'-monophosphate (UMP). This Streptococcus pneumoniae (strain JJA) protein is Orotidine 5'-phosphate decarboxylase.